The chain runs to 202 residues: Glycerol-3-phosphate acyltransferase (202 aa).

5 helical membrane passes run 3–23 (NLII…LILA), 87–107 (LLWS…YLLF), 118–138 (GAMI…WVVI), 144–164 (ISSL…FIFN), and 167–187 (LEIH…YKHL).

Belongs to the PlsY family. In terms of assembly, probably interacts with PlsX.

The protein resides in the cell inner membrane. It catalyses the reaction an acyl phosphate + sn-glycerol 3-phosphate = a 1-acyl-sn-glycero-3-phosphate + phosphate. It functions in the pathway lipid metabolism; phospholipid metabolism. Functionally, catalyzes the transfer of an acyl group from acyl-phosphate (acyl-PO(4)) to glycerol-3-phosphate (G3P) to form lysophosphatidic acid (LPA). This enzyme utilizes acyl-phosphate as fatty acyl donor, but not acyl-CoA or acyl-ACP. This Campylobacter jejuni subsp. jejuni serotype O:2 (strain ATCC 700819 / NCTC 11168) protein is Glycerol-3-phosphate acyltransferase.